A 419-amino-acid chain; its full sequence is UDP-N-acetylglucosamine 1-carboxyvinyltransferase (419 aa).

23-24 (KN) contributes to the phosphoenolpyruvate binding site. Arg92 contributes to the UDP-N-acetyl-alpha-D-glucosamine binding site. Cys116 serves as the catalytic Proton donor. Cys116 is modified (2-(S-cysteinyl)pyruvic acid O-phosphothioketal). UDP-N-acetyl-alpha-D-glucosamine-binding positions include 121–125 (RPVDL), 161–164 (KVSV), Asp306, and Ile328.

This sequence belongs to the EPSP synthase family. MurA subfamily.

Its subcellular location is the cytoplasm. The enzyme catalyses phosphoenolpyruvate + UDP-N-acetyl-alpha-D-glucosamine = UDP-N-acetyl-3-O-(1-carboxyvinyl)-alpha-D-glucosamine + phosphate. Its pathway is cell wall biogenesis; peptidoglycan biosynthesis. Functionally, cell wall formation. Adds enolpyruvyl to UDP-N-acetylglucosamine. This Vibrio cholerae serotype O1 (strain ATCC 39541 / Classical Ogawa 395 / O395) protein is UDP-N-acetylglucosamine 1-carboxyvinyltransferase.